The chain runs to 782 residues: Endonuclease MutS2 (782 aa).

Residue 336–343 (GPNTGGKT) coordinates ATP. The 76-residue stretch at 707–782 (LDLRGYRYDE…GFGVTVVEIK (76 aa)) folds into the Smr domain.

This sequence belongs to the DNA mismatch repair MutS family. MutS2 subfamily. As to quaternary structure, homodimer. Binds to stalled ribosomes, contacting rRNA.

Functionally, endonuclease that is involved in the suppression of homologous recombination and thus may have a key role in the control of bacterial genetic diversity. In terms of biological role, acts as a ribosome collision sensor, splitting the ribosome into its 2 subunits. Detects stalled/collided 70S ribosomes which it binds and splits by an ATP-hydrolysis driven conformational change. Acts upstream of the ribosome quality control system (RQC), a ribosome-associated complex that mediates the extraction of incompletely synthesized nascent chains from stalled ribosomes and their subsequent degradation. Probably generates substrates for RQC. The polypeptide is Endonuclease MutS2 (Staphylococcus saprophyticus subsp. saprophyticus (strain ATCC 15305 / DSM 20229 / NCIMB 8711 / NCTC 7292 / S-41)).